Here is a 76-residue protein sequence, read N- to C-terminus: uncharacterized protein (76 aa).

The helical transmembrane segment at 18-38 (FISALFFFNAVCIVSDNLLII) threads the bilayer.

The protein resides in the cell membrane. This is an uncharacterized protein from Escherichia coli O6:H1 (strain CFT073 / ATCC 700928 / UPEC).